A 343-amino-acid chain; its full sequence is Small ribosomal subunit biogenesis GTPase RsgA (343 aa).

The 160-residue stretch at 116-275 (RGQLKPVAAN…LIDSPGIREF (160 aa)) folds into the CP-type G domain. Residues 163–166 (NKFD) and 217–225 (GQSGVGKSS) each bind GTP. 4 residues coordinate Zn(2+): Cys299, Cys304, His306, and Cys312.

This sequence belongs to the TRAFAC class YlqF/YawG GTPase family. RsgA subfamily. As to quaternary structure, monomer. Associates with 30S ribosomal subunit, binds 16S rRNA. It depends on Zn(2+) as a cofactor.

Its subcellular location is the cytoplasm. In terms of biological role, one of several proteins that assist in the late maturation steps of the functional core of the 30S ribosomal subunit. Helps release RbfA from mature subunits. May play a role in the assembly of ribosomal proteins into the subunit. Circularly permuted GTPase that catalyzes slow GTP hydrolysis, GTPase activity is stimulated by the 30S ribosomal subunit. This is Small ribosomal subunit biogenesis GTPase RsgA from Pseudomonas fluorescens (strain SBW25).